A 396-amino-acid chain; its full sequence is Elongation factor Tu (396 aa).

One can recognise a tr-type G domain in the interval 10 to 206; the sequence is KPHCNIGTIG…AVDAYIPQPE (197 aa). A G1 region spans residues 19–26; the sequence is GHVDHGKT. 19-26 lines the GTP pocket; sequence GHVDHGKT. Thr26 provides a ligand contact to Mg(2+). The interval 60–64 is G2; it reads GITIS. Positions 81–84 are G3; the sequence is DCPG. Residues 81–85 and 136–139 each bind GTP; these read DCPGH and NKVD. Positions 136–139 are G4; sequence NKVD. The G5 stretch occupies residues 174–176; it reads SAL.

This sequence belongs to the TRAFAC class translation factor GTPase superfamily. Classic translation factor GTPase family. EF-Tu/EF-1A subfamily. In terms of assembly, monomer.

The protein localises to the cytoplasm. It carries out the reaction GTP + H2O = GDP + phosphate + H(+). In terms of biological role, GTP hydrolase that promotes the GTP-dependent binding of aminoacyl-tRNA to the A-site of ribosomes during protein biosynthesis. This Gluconacetobacter diazotrophicus (strain ATCC 49037 / DSM 5601 / CCUG 37298 / CIP 103539 / LMG 7603 / PAl5) protein is Elongation factor Tu.